The sequence spans 243 residues: Vimentin A2 (243 aa).

The interval 1–22 (GFSLQDELDFLKKLHDEELADV) is coil 1B. The IF rod domain occupies 1–188 (GFSLQDELDF…KLLEGEESRI (188 aa)). The segment at 23 to 45 (QAQIQDQQVQVDMDMAKPDLTAA) is linker 12. Positions 46 to 184 (LRDVRLQYEN…ATYRKLLEGE (139 aa)) are coil 2. The segment at 185 to 243 (ESRITTPLPNLSSFNLRDAILETKPILENTFSKKVLIKTIETRDGEVINESTQNHDDLE) is tail.

This sequence belongs to the intermediate filament family. As to quaternary structure, homomer. Post-translationally, one of the most prominent phosphoproteins in various cells of mesenchymal origin. Phosphorylation is enhanced during cell division, at which time vimentin filaments are significantly reorganized. As to expression, expressed in low amounts in retina, optic nerve, and brain and in higher amounts in spinal cord.

Functionally, vimentins are class-III intermediate filaments found in various non-epithelial cells, especially mesenchymal cells. Vimentin is attached to the nucleus, endoplasmic reticulum, and mitochondria, either laterally or terminally. The chain is Vimentin A2 from Carassius auratus (Goldfish).